The sequence spans 237 residues: Ubiquinone biosynthesis O-methyltransferase (237 aa).

Positions 38, 58, 79, and 124 each coordinate S-adenosyl-L-methionine.

Belongs to the methyltransferase superfamily. UbiG/COQ3 family.

The enzyme catalyses a 3-demethylubiquinol + S-adenosyl-L-methionine = a ubiquinol + S-adenosyl-L-homocysteine + H(+). The catalysed reaction is a 3-(all-trans-polyprenyl)benzene-1,2-diol + S-adenosyl-L-methionine = a 2-methoxy-6-(all-trans-polyprenyl)phenol + S-adenosyl-L-homocysteine + H(+). The protein operates within cofactor biosynthesis; ubiquinone biosynthesis. O-methyltransferase that catalyzes the 2 O-methylation steps in the ubiquinone biosynthetic pathway. The chain is Ubiquinone biosynthesis O-methyltransferase from Acinetobacter baumannii (strain SDF).